A 295-amino-acid polypeptide reads, in one-letter code: Probable CBASS effector molecule IK1_05631 (295 aa).

A run of 4 helical transmembrane segments spans residues 26–46 (IFYAVRISISILIPILSISIY), 56–76 (SNTGVWFSVIGSIWLLIAYQI), 167–187 (ILLFTVSVLYLFLTIAFGFFV), and 190–210 (SMQEYIIKILLPSMSILIYGF).

It localises to the cell membrane. Functionally, effector protein of a CBASS antiviral system. CBASS (cyclic oligonucleotide-based antiphage signaling system) provides immunity against bacteriophage. The CD-NTase protein synthesizes cyclic nucleotides in response to infection; these serve as specific second messenger signals. The signals activate a diverse range of effectors, leading to bacterial cell death and thus abortive phage infection. A type I-B CBASS system. Protects B.subtilis against phage infection. When IK1_05630 and IK1_05631 are introduced in B.subtilis BEST7003 there is 1000-fold protection against phage SBSphiC. Both genes are required for protection. Activation leads to bacterial cell lysis and death, which occurs before the phage has finished its replication cycle, thus protecting non-infected bacteria by aborting the phage infection and preventing its propagation. In Bacillus cereus (strain VD146), this protein is Probable CBASS effector molecule IK1_05631.